Here is a 94-residue protein sequence, read N- to C-terminus: Conotoxin Im026 (94 aa).

A signal peptide spans 1 to 24 (MRLTTMHSVILMLLLVFAFDNVDG). The propeptide occupies 25–59 (DEPGQTARDVDNRNFMSILRSEGKPVHFLRAIKKR).

Post-translationally, contains 4 disulfide bonds. Expressed by the venom duct.

The protein localises to the secreted. Its function is as follows. Probable neurotoxin. In Conus imperialis (Imperial cone), this protein is Conotoxin Im026.